The primary structure comprises 829 residues: MGKKGKVGKSRRDKFYHLAKETGYRSRSAFKLIQLNRRFQFLQKARALLDLCAAPGGWLQVAAKFMPVSSLIVGVDLVPIKPLPNVVTLQEDITTERCRQALRKELKTWKVDVVLNDGAPNVGASWVHDAYSQAHLTLMALRLACDFLARGGCFITKVFRSRDYQPLLWIFQQLFHRVQATKPQASRHESAEIFVVCQGFLAPDKVDAKFFDPKFAFKEVEVQAKTVTELVTKKKPKAEGYAEGDLTLYHRTSVTDFLRAANPVDFLSKASEISIDDKELAQHPATTEDIRACCQDIKVLGRKELRSLLNWRTKLRRYVAKKLKEQAKALDISLSSEEEGDEEESAAETKQASEEEEEREEEEQLNRTLAEMKAQEVAELKRKKKKLLREQRKQRERVELKMDLPGVSIADEGETGMFSLRTIRGQQLLEEVTQGDMNAADTFLSDLPRDDIYVSDAEDDDDTSLESDLDPEELAGVRTHSDQKEQKSLQFAQVDDSKEEEGENPLLVPLEEKAVLQEEQASLWFSKDGFSGIDDDADEALEISQAQLLYKSRQKEQQPTDPPPPPTNLKTEKKSSQCQNEVPKETEAITDTGGEDRDSSDSDSSSSEDEDDWKVSRGKKRSRGSKADEDGFEVVPIEDPVKYRILDPEGLALGAVIASSKKAKRDLIDNSFNRYAFNEEEEELPEWFVQEEKQHRIRQLPLDKKEVEHYRKRWREINARPIKKVAEAKARKKRRMLKKLEQTKKKAEAVVNTVDISEREKVAQLRSLYKKAGLGKEKRQVTYVVAKKGVGRKVRRPAGVRGHFKVVDSRMKKDQRAQRKEQKRNHRRK.

S-adenosyl-L-methionine is bound by residues Gly56, Trp58, Asp76, Asp92, and Asp117. The Proton acceptor role is filled by Lys157. Residues 332 to 367 (ISLSSEEEGDEEESAAETKQASEEEEEREEEEQLNR) form a disordered region. Phosphoserine is present on residues Ser333, Ser335, Ser336, Ser345, and Ser353. Residues 336-346 (SEEEGDEEESA) show a composition bias toward acidic residues. Residues 354–363 (EEEEEREEEE) show a composition bias toward acidic residues. Residue Arg389 is modified to Citrulline. Disordered regions lie at residues 443-508 (FLSD…PLLV) and 528-634 (DGFS…GFEV). Over residues 456-473 (DAEDDDDTSLESDLDPEE) the composition is skewed to acidic residues. Phosphoserine is present on residues Ser531 and Ser544. Lys570 participates in a covalent cross-link: Glycyl lysine isopeptide (Lys-Gly) (interchain with G-Cter in SUMO2). Residue Ser575 is modified to Phosphoserine. Glycyl lysine isopeptide (Lys-Gly) (interchain with G-Cter in SUMO2) cross-links involve residues Lys626 and Lys642. Ser659 carries the post-translational modification Phosphoserine. Residue Lys661 forms a Glycyl lysine isopeptide (Lys-Gly) (interchain with G-Cter in SUMO2) linkage. At Ser671 the chain carries Phosphoserine. A Glycyl lysine isopeptide (Lys-Gly) (interchain with G-Cter in SUMO2) cross-link involves residue Lys693. The stretch at 722–760 (IKKVAEAKARKKRRMLKKLEQTKKKAEAVVNTVDISERE) forms a coiled coil. Citrulline is present on Arg766. The segment covering 794–804 (VRRPAGVRGHF) has biased composition (basic residues). A disordered region spans residues 794 to 829 (VRRPAGVRGHFKVVDSRMKKDQRAQRKEQKRNHRRK). Residues 805-820 (KVVDSRMKKDQRAQRK) are compositionally biased toward basic and acidic residues.

This sequence belongs to the class I-like SAM-binding methyltransferase superfamily. RNA methyltransferase RlmE family. SPB1 subfamily. Interacts with NIP7. In terms of processing, citrullinated by PADI4.

It is found in the nucleus. The protein resides in the nucleolus. The enzyme catalyses a ribonucleotide in rRNA + S-adenosyl-L-methionine = a 2'-O-methylribonucleotide in rRNA + S-adenosyl-L-homocysteine + H(+). In terms of biological role, RNA 2'-O-methyltransferase involved in the processing of the 34S pre-rRNA to 18S rRNA and in 40S ribosomal subunit formation. This is pre-rRNA 2'-O-ribose RNA methyltransferase FTSJ3 (Ftsj3) from Rattus norvegicus (Rat).